The following is a 1746-amino-acid chain: Non-reducing polyketide synthase ptaA (1746 aa).

The N-terminal acylcarrier protein transacylase domain (SAT) stretch occupies residues 4-227 (NSGSGTSPWG…ALPVYGGLCH (224 aa)). The 436-residue stretch at 361-796 (QSKIAIVGMS…GGNTTIAIEE (436 aa)) folds into the Ketosynthase family 3 (KS3) domain. Catalysis depends on for beta-ketoacyl synthase activity residues cysteine 534, histidine 670, and histidine 714. Positions 898-1218 (FAFTGQGASY…LGALHLAGIP (321 aa)) are malonyl-CoA:ACP transacylase (MAT) domain. The product template (PT) domain stretch occupies residues 1286–1605 (TSTVHRVIGE…RLLLDRFFSA (320 aa)). Residues 1290–1425 (HRVIGETFDG…ATLFYGKAND (136 aa)) form an N-terminal hotdog fold region. The PKS/mFAS DH domain occupies 1290–1600 (HRVIGETFDG…FRRYPRLLLD (311 aa)). Histidine 1322 acts as the Proton acceptor; for dehydratase activity in catalysis. Residues 1452-1600 (VANRFSRNMA…FRRYPRLLLD (149 aa)) form a C-terminal hotdog fold region. Residue aspartate 1511 is the Proton donor; for dehydratase activity of the active site. One can recognise a Carrier domain in the interval 1671 to 1745 (DSITVKAMAL…DLRAWLLEYY (75 aa)). At serine 1705 the chain carries O-(pantetheine 4'-phosphoryl)serine.

The catalysed reaction is holo-[ACP] + 8 malonyl-CoA + 8 H(+) = atrochrysone carboxyl-[ACP] + 8 CO2 + 8 CoA + 2 H2O. It participates in secondary metabolite biosynthesis. Functionally, non-reducing polyketide synthase; part of the gene cluster that mediates the biosynthesis of pestheic acid, a diphenyl ether which is a biosynthetic precursor of the unique chloropupukeananes. The biosynthesis initiates from condensation of acetate and malonate units catalyzed by the non-reducing PKS ptaA. As the ptaA protein is TE/CLC domain-deficient, hydrolysis and Claisen cyclization of the polyketide could be catalyzed by ptaB containing a beta-lactamase domain. The ptaB protein might hydrolyze the thioester bond between the ACP of ptaA and the intermediate to release atrochrysone carboxylic acid, which is spontaneously dehydrated to form endocrocin anthrone. Endocrocin anthrone is then converted to endocrocin, catalyzed by the anthrone oxygenase ptaC. Spontaneous decarboxylation of endocrocin occurs to generate emodin. An O-methyltransferase (ptaH or ptaI) could methylate emodin to form physcion. PtaJ could then catalyze the oxidative cleavage of physcion, and rotation of the intermediate could then afford desmethylisosulochrin. PtaF, a putative NADH-dependent oxidoreductase, might also participate in the oxidative cleavage step. Desmethylisosulochrin is then transformed by another O-methyltransferase (ptaH or ptaI) to form isosulochrin. Chlorination of isosulochrin by ptaM in the cyclohexadienone B ring then produces chloroisosulochrin. PtaE is responsible for the oxidative coupling reactions of both benzophenones isosulochrin and chloroisosulochrin to RES-1214-1 and pestheic acid respectively, regardless of chlorination. In Pestalotiopsis fici (strain W106-1 / CGMCC3.15140), this protein is Non-reducing polyketide synthase ptaA.